The primary structure comprises 73 residues: Toxin Td4 (73 aa).

Positions 1–7 (IGMVVEC) are cleaved as a signal peptide. The region spanning 8 to 70 (KDGYLVGNDG…TWDRATNRCG (63 aa)) is the LCN-type CS-alpha/beta domain. 4 disulfide bridges follow: cysteine 18/cysteine 69, cysteine 22/cysteine 44, cysteine 30/cysteine 50, and cysteine 34/cysteine 52. Arginine 71 carries the post-translational modification Arginine amide.

This sequence belongs to the long (4 C-C) scorpion toxin superfamily. Sodium channel inhibitor family. Beta subfamily. Expressed by the venom gland.

The protein localises to the secreted. Functionally, beta toxins bind voltage-independently at site-4 of sodium channels (Nav) and shift the voltage of activation toward more negative potentials thereby affecting sodium channel activation and promoting spontaneous and repetitive firing. This chain is Toxin Td4, found in Tityus discrepans (Venezuelan scorpion).